Consider the following 408-residue polypeptide: Epsin-3 (408 aa).

Residue Ser2 is modified to N-acetylserine. The ENTH domain maps to Asn24 to Arg157. A disordered region spans residues Glu162–Asn182. Phosphoserine occurs at positions 196, 198, 203, 212, and 223. 2 disordered regions span residues Ala199–Ala322 and Thr338–Phe408. Acidic residues predominate over residues Phe201–Asp210. Residues Gly211 to Gln231 are compositionally biased toward polar residues. The span at Lys249–Asp263 shows a compositional bias: basic and acidic residues. Over residues Glu264 to Ser273 the composition is skewed to acidic residues. The segment covering Val279–Gly317 has biased composition (polar residues). Residues Thr338–Pro361 are compositionally biased toward low complexity. Composition is skewed to polar residues over residues Val362–Thr371 and Gln388–Thr398. Over residues Ser399–Phe408 the composition is skewed to basic and acidic residues.

As to quaternary structure, interacts with the clathrin adapter GGA2, and VPS27.

It is found in the cytoplasm. The protein resides in the golgi apparatus. Its subcellular location is the trans-Golgi network membrane. The protein localises to the cytoplasmic vesicle. It localises to the clathrin-coated vesicle membrane. Involved in the recruitment of clathrin to the Golgi network and endosomes to form clathrin coated vesicles. Plays a role in the trafficking of clathrin between the Golgi network and endosomes. Binds to membranes enriched in phosphatidylinositol-3,5-bisphosphate (PtdIns(3,5)P2) and, in association with VPS27, is involved in protein sorting at the multivesicular body (MVB). This chain is Epsin-3 (ENT3), found in Saccharomyces cerevisiae (strain ATCC 204508 / S288c) (Baker's yeast).